The following is a 276-amino-acid chain: Adenylate kinase (276 aa).

Residue 38 to 43 participates in ATP binding; it reads GSGKGT. Positions 58 to 87 are NMP; it reads STGDMLRAAIEQGTETGKQAKTIMDQGGLV. Residues T59, R64, 85–87, 113–116, and Q120 contribute to the AMP site; these read GLV and GFPR. Residues 154 to 191 are LID; sequence GRLVHPSSGRSYHREFFPPKVDMIDDITGEPLIQRSDD. ATP contacts are provided by residues R155 and 164–165; that span reads SY. R188 and R199 together coordinate AMP. K227 serves as a coordination point for ATP.

The protein belongs to the adenylate kinase family. AK2 subfamily. As to quaternary structure, monomer.

The protein resides in the cytoplasm. It is found in the cytosol. The protein localises to the mitochondrion intermembrane space. It carries out the reaction AMP + ATP = 2 ADP. Functionally, catalyzes the reversible transfer of the terminal phosphate group between ATP and AMP. Plays an important role in cellular energy homeostasis and in adenine nucleotide metabolism. Adenylate kinase activity is critical for regulation of the phosphate utilization and the AMP de novo biosynthesis pathways. The polypeptide is Adenylate kinase (adkA) (Dictyostelium discoideum (Social amoeba)).